A 382-amino-acid chain; its full sequence is Glycerate dehydrogenase (382 aa).

Residues 175 to 176 (RI), 271 to 273 (CSR), and Asp297 each bind NAD(+). Arg273 is an active-site residue. Residue Glu302 is part of the active site. His320 (proton donor) is an active-site residue. 320–323 (HIAS) lines the NAD(+) pocket.

It belongs to the D-isomer specific 2-hydroxyacid dehydrogenase family.

The protein localises to the peroxisome. It carries out the reaction (R)-glycerate + NAD(+) = 3-hydroxypyruvate + NADH + H(+). It functions in the pathway photosynthesis; photorespiration; 3-phospho-D-glycerate from glycine: step 3/4. This Cucumis sativus (Cucumber) protein is Glycerate dehydrogenase (HPR-A).